The following is a 62-amino-acid chain: Cobrotoxin II (62 aa).

Polar residues predominate over residues 1–16; sequence LECHNQQSSQTPTTTG. The disordered stretch occupies residues 1 to 23; sequence LECHNQQSSQTPTTTGCSGGENN. Disulfide bonds link C3/C24, C17/C41, C43/C54, and C55/C60.

The protein belongs to the three-finger toxin family. Short-chain subfamily. Type I alpha-neurotoxin sub-subfamily. Expressed by the venom gland.

The protein localises to the secreted. Binds to muscle nicotinic acetylcholine receptor (nAChR) and inhibit acetylcholine from binding to the receptor, thereby impairing neuromuscular transmission. In Naja kaouthia (Monocled cobra), this protein is Cobrotoxin II.